The sequence spans 387 residues: Phosphoglycerate kinase (387 aa).

Substrate is bound by residues 21 to 23 (DLN), Arg36, and 59 to 62 (HLGR). N6-acetyllysine is present on Lys84. Substrate contacts are provided by Arg113 and Arg146. ATP is bound by residues Lys197, Glu314, and 340–343 (GGDT).

The protein belongs to the phosphoglycerate kinase family. Monomer.

Its subcellular location is the cytoplasm. It carries out the reaction (2R)-3-phosphoglycerate + ATP = (2R)-3-phospho-glyceroyl phosphate + ADP. It functions in the pathway carbohydrate degradation; glycolysis; pyruvate from D-glyceraldehyde 3-phosphate: step 2/5. In Escherichia coli O9:H4 (strain HS), this protein is Phosphoglycerate kinase.